Reading from the N-terminus, the 568-residue chain is Urease subunit alpha (568 aa).

Residues 130–568 (GGIDTHIHFI…LPMAQRYFLF (439 aa)) enclose the Urease domain. Ni(2+) is bound by residues histidine 135, histidine 137, and lysine 218. Lysine 218 carries the post-translational modification N6-carboxylysine. Residue histidine 220 coordinates substrate. Ni(2+) is bound by residues histidine 247 and histidine 273. Histidine 321 acts as the Proton donor in catalysis. Position 361 (aspartate 361) interacts with Ni(2+).

This sequence belongs to the metallo-dependent hydrolases superfamily. Urease alpha subunit family. Heterotrimer of UreA (gamma), UreB (beta) and UreC (alpha) subunits. Three heterotrimers associate to form the active enzyme. The cofactor is Ni cation. Post-translationally, carboxylation allows a single lysine to coordinate two nickel ions.

The protein localises to the cytoplasm. The catalysed reaction is urea + 2 H2O + H(+) = hydrogencarbonate + 2 NH4(+). It participates in nitrogen metabolism; urea degradation; CO(2) and NH(3) from urea (urease route): step 1/1. The sequence is that of Urease subunit alpha from Burkholderia orbicola (strain MC0-3).